The sequence spans 278 residues: 4-diphosphocytidyl-2-C-methyl-D-erythritol kinase (278 aa).

The active site involves lysine 9. Proline 89–alanine 99 lines the ATP pocket. Aspartate 128 is a catalytic residue.

This sequence belongs to the GHMP kinase family. IspE subfamily.

It catalyses the reaction 4-CDP-2-C-methyl-D-erythritol + ATP = 4-CDP-2-C-methyl-D-erythritol 2-phosphate + ADP + H(+). It functions in the pathway isoprenoid biosynthesis; isopentenyl diphosphate biosynthesis via DXP pathway; isopentenyl diphosphate from 1-deoxy-D-xylulose 5-phosphate: step 3/6. Functionally, catalyzes the phosphorylation of the position 2 hydroxy group of 4-diphosphocytidyl-2C-methyl-D-erythritol. This is 4-diphosphocytidyl-2-C-methyl-D-erythritol kinase from Cereibacter sphaeroides (strain ATCC 17025 / ATH 2.4.3) (Rhodobacter sphaeroides).